The chain runs to 510 residues: ATP synthase subunit alpha, mitochondrial (510 aa).

171 to 178 is a binding site for ATP; sequence GDRQTGKT.

In terms of assembly, F-type ATP synthases have 2 components, the catalytic core F(1) and the membrane-embedded component F(0), linked together by a central stalk and a peripheral stalk. The central stalk, also called rotor shaft, is often seen as part of F(1). The peripheral stalk is seen as part of F(0). F(0) contains the membrane channel next to the rotor. F-type ATP synthases form dimers but each monomer functions independently in ATP generation. The dimer consists of 18 different polypeptides: ATP1 (subunit alpha, part of F(1), 3 molecules per monomer), ATP2 (subunit beta, part of F(1), 3 molecules per monomer), ATP3 (subunit gamma, part of the central stalk), ATP4 (subunit b, part of the peripheral stalk), ATP5/OSCP (subunit 5/OSCP, part of the peripheral stalk), ATP6 (subunit a, part of the peripheral stalk), ATP7 (subunit d, part of the peripheral stalk), ATP8 (subunit 8, part of the peripheral stalk), OLI1 (subunit c, part of the rotor, 10 molecules per monomer), ATP14 (subunit h, part of the peripheral stalk), ATP15 (subunit epsilon, part of the central stalk), ATP16 (subunit delta, part of the central stalk), ATP17 (subunit f, part of the peripheral stalk), ATP18 (subunit i/j, part of the peripheral stalk). Dimer-specific subunits are ATP19 (subunit k, at interface between monomers), ATP20 (subunit g, at interface between monomers), TIM11 (subunit e, at interface between monomers). Also contains subunit L.

It is found in the mitochondrion inner membrane. Mitochondrial membrane ATP synthase (F(1)F(0) ATP synthase or Complex V) produces ATP from ADP in the presence of a proton gradient across the membrane which is generated by electron transport complexes of the respiratory chain. F-type ATP synthases consist of two structural domains, F(1) - containing the extramembraneous catalytic core, and F(0) - containing the membrane proton channel, linked together by a central stalk and a peripheral stalk. During catalysis, ATP synthesis in the catalytic domain of F(1) is coupled via a rotary mechanism of the central stalk subunits to proton translocation. Subunits alpha/ATP1 and beta/ATP2 form the catalytic core in F(1). Rotation of the central stalk against the surrounding alpha/ATP1(3)beta/ATP2(3) subunits leads to hydrolysis of ATP in three separate catalytic sites on the beta/ATP2 subunits. Subunit alpha/ATP1 does not bear the catalytic high-affinity ATP-binding sites. This is ATP synthase subunit alpha, mitochondrial from Pichia angusta (Yeast).